Here is a 4568-residue protein sequence, read N- to C-terminus: Dynein heavy chain, cytoplasmic (4568 aa).

The tract at residues 1–1826 is stem; the sequence is MDSGNESSII…VVKMANSQFF (1826 aa). Coiled coils occupy residues 587-652, 814-844, 1241-1274, 1324-1340, and 1559-1591; these read QTRL…VLGK, KLAETVNTYQERCEELLNVVRIVNADLNVLK, QEALNVITAFEAKLNKLTEERNKMRKARVALDLS, RKIRQSLDELMNQLKQL, and VNMQGAQRLLERLADMLAKIQKALGEYLERERS. AAA stretches follow at residues 1827–2049, 2118–2394, 2498–2747, and 2842–3111; these read YGFE…VLVS, QQLS…PTPQ, EIES…WVRG, and GFYE…GHRV. ATP-binding positions include 1865–1872, 2163–2170, 2537–2544, and 2880–2887; these read GPAGTGKT, GSSGSGKT, GPPGSGKT, and GTAGAGKT. Coiled coils occupy residues 3132–3229, 3339–3432, and 3707–3739; these read EKRS…AQVE, ARAQ…RDRW, and NSVIETLEKLKNEAAEVAQKSAETDKVMAEVDA. A stalk region spans residues 3132-3432; the sequence is EKRSDLEEEK…SSLRSERDRW (301 aa). AAA stretches follow at residues 3496–3725 and 3954–4169; these read LSTV…EVAQ and AHRV…TLDA. Residues 4359–4386 adopt a coiled-coil conformation; it reads QLLKDIRRDLNEISAVCRAEKKQNNETR.

Belongs to the dynein heavy chain family. In terms of assembly, consists of at least two heavy chains and a number of intermediate and light chains.

It localises to the cytoplasm. The protein resides in the cytoskeleton. Functionally, cytoplasmic dynein acts as a motor for the intracellular retrograde motility of vesicles and organelles along microtubules. Dynein has ATPase activity; the force-producing power stroke is thought to occur on release of ADP. May play a role in nuclear migration in hypodermal precursor cells. May be involved in the transport of synaptic vesicle components towards the axon of the DA motor neuron. This function may involve the regulation of dynein by pct-1 and/or cdk-5. Involved in the formation of synapses in the dorsal region during synaptic remodeling of DD motor neurons. Required for anterograde trafficking of dense-core vesicles in the DB motor neuron dendrites. Required for the formation of dendritic branches of PVD sensory neurons. May also play a role in GABAergic synaptic vesicle localization in the ventral nerve cord. May play a role in the pairing of homologous chromosomes during meiosis. This Caenorhabditis elegans protein is Dynein heavy chain, cytoplasmic.